Consider the following 196-residue polypeptide: Probable GTP-binding protein EngB (196 aa).

Residues 22 to 196 enclose the EngB-type G domain; sequence NLPEIALAGR…GNWIEDKISQ (175 aa). Residues 30-37, 57-61, 75-78, 142-145, and 175-177 contribute to the GTP site; these read GRSNVGKS, GKTQT, DVPG, TKMD, and FSS. The Mg(2+) site is built by S37 and T59.

This sequence belongs to the TRAFAC class TrmE-Era-EngA-EngB-Septin-like GTPase superfamily. EngB GTPase family. Mg(2+) is required as a cofactor.

Its function is as follows. Necessary for normal cell division and for the maintenance of normal septation. This chain is Probable GTP-binding protein EngB, found in Lactobacillus acidophilus (strain ATCC 700396 / NCK56 / N2 / NCFM).